We begin with the raw amino-acid sequence, 218 residues long: Ras-related protein Rab-27B (218 aa).

Threonine 2 is modified (N-acetylthreonine). 16–24 (GDSGVGKTT) is a GTP binding site. An Effector region motif is present at residues 38 to 46 (FITTVGIDF). Residues 74 to 78 (DTAGQ), 133 to 136 (NKAD), and 163 to 165 (SAA) each bind GTP. Cysteine 123 and cysteine 188 are oxidised to a cystine. The disordered stretch occupies residues 194–218 (IPDTVNGGNSGNLDGEKPPEKKCIC). Basic and acidic residues predominate over residues 207–218 (DGEKPPEKKCIC). 2 S-geranylgeranyl cysteine lipidation sites follow: cysteine 216 and cysteine 218. Cysteine 218 carries the post-translational modification Cysteine methyl ester.

The protein belongs to the small GTPase superfamily. Rab family. Interacts with SYTL2, SYTL4, MYRIP and MLPH. Interacts with RPH3A and RPH3A. Interacts (GDP-bound form preferentially) with DENND10. Expressed primarily in testis.

The protein localises to the membrane. The protein resides in the late endosome. The catalysed reaction is GTP + H2O = GDP + phosphate + H(+). With respect to regulation, regulated by guanine nucleotide exchange factors (GEFs) which promote the exchange of bound GDP for free GTP, GTPase activating proteins (GAPs) which increase the GTP hydrolysis activity, and GDP dissociation inhibitors which inhibit the dissociation of the nucleotide from the GTPase. Activated by GEFs such as DENND10. Small GTPase which cycles between active GTP-bound and inactive GDP-bound states. In its active state, binds to a variety of effector proteins to regulate homeostasis of late endocytic pathway, including endosomal positioning, maturation and secretion. Plays a role in NTRK2/TRKB axonal anterograde transport by facilitating the association of NTRK2/TRKB with KLC1. May be involved in targeting uroplakins to urothelial apical membranes. The sequence is that of Ras-related protein Rab-27B (RAB27B) from Homo sapiens (Human).